We begin with the raw amino-acid sequence, 504 residues long: Phosphoenolpyruvate carboxylase (504 aa).

The segment covering 1-16 (MTSRKIPSIMGTQHPD) has biased composition (polar residues). The tract at residues 1-21 (MTSRKIPSIMGTQHPDNANAP) is disordered.

This sequence belongs to the PEPCase type 2 family. Homotetramer. Mg(2+) serves as cofactor.

It carries out the reaction oxaloacetate + phosphate = phosphoenolpyruvate + hydrogencarbonate. In terms of biological role, catalyzes the irreversible beta-carboxylation of phosphoenolpyruvate (PEP) to form oxaloacetate (OAA), a four-carbon dicarboxylic acid source for the tricarboxylic acid cycle. This is Phosphoenolpyruvate carboxylase from Leuconostoc mesenteroides subsp. mesenteroides (strain ATCC 8293 / DSM 20343 / BCRC 11652 / CCM 1803 / JCM 6124 / NCDO 523 / NBRC 100496 / NCIMB 8023 / NCTC 12954 / NRRL B-1118 / 37Y).